The following is a 152-amino-acid chain: Transcriptional regulator MraZ (152 aa).

SpoVT-AbrB domains lie at Ala5–Glu52 and Ala81–Thr124.

This sequence belongs to the MraZ family. In terms of assembly, forms oligomers.

The protein localises to the cytoplasm. Its subcellular location is the nucleoid. In terms of biological role, negatively regulates its own expression and that of the subsequent genes in the proximal part of the division and cell wall (dcw) gene cluster. Acts by binding directly to DNA. May also regulate the expression of genes outside the dcw cluster. The protein is Transcriptional regulator MraZ of Pectobacterium atrosepticum (strain SCRI 1043 / ATCC BAA-672) (Erwinia carotovora subsp. atroseptica).